The following is a 425-amino-acid chain: Serine--tRNA ligase (425 aa).

An L-serine-binding site is contributed by Thr235 to Glu237. Arg266–Glu268 lines the ATP pocket. Position 289 (Glu289) interacts with L-serine. Residue Glu353–Ser356 participates in ATP binding. Ser389 is a binding site for L-serine.

The protein belongs to the class-II aminoacyl-tRNA synthetase family. Type-1 seryl-tRNA synthetase subfamily. As to quaternary structure, homodimer. The tRNA molecule binds across the dimer.

The protein localises to the cytoplasm. The enzyme catalyses tRNA(Ser) + L-serine + ATP = L-seryl-tRNA(Ser) + AMP + diphosphate + H(+). It catalyses the reaction tRNA(Sec) + L-serine + ATP = L-seryl-tRNA(Sec) + AMP + diphosphate + H(+). It participates in aminoacyl-tRNA biosynthesis; selenocysteinyl-tRNA(Sec) biosynthesis; L-seryl-tRNA(Sec) from L-serine and tRNA(Sec): step 1/1. In terms of biological role, catalyzes the attachment of serine to tRNA(Ser). Is also able to aminoacylate tRNA(Sec) with serine, to form the misacylated tRNA L-seryl-tRNA(Sec), which will be further converted into selenocysteinyl-tRNA(Sec). The chain is Serine--tRNA ligase from Desulfotalea psychrophila (strain LSv54 / DSM 12343).